A 102-amino-acid chain; its full sequence is Large ribosomal subunit protein bL21 (102 aa).

The protein belongs to the bacterial ribosomal protein bL21 family. As to quaternary structure, part of the 50S ribosomal subunit. Contacts protein L20.

Its function is as follows. This protein binds to 23S rRNA in the presence of protein L20. This is Large ribosomal subunit protein bL21 from Cutibacterium acnes (strain DSM 16379 / KPA171202) (Propionibacterium acnes).